The primary structure comprises 234 residues: LexA repressor (234 aa).

The segment at residues 26–46 (FDEMKDALDLRSKSGIHRLIT) is a DNA-binding region (H-T-H motif). The segment at 80 to 107 (RGFTPSVIEGNLGKVRPPSPQHAEDDSD) is disordered. Residues Ser-155 and Lys-193 each act as for autocatalytic cleavage activity in the active site.

This sequence belongs to the peptidase S24 family. In terms of assembly, homodimer.

It catalyses the reaction Hydrolysis of Ala-|-Gly bond in repressor LexA.. In terms of biological role, represses a number of genes involved in the response to DNA damage (SOS response), including recA and lexA. In the presence of single-stranded DNA, RecA interacts with LexA causing an autocatalytic cleavage which disrupts the DNA-binding part of LexA, leading to derepression of the SOS regulon and eventually DNA repair. The protein is LexA repressor of Rhodopseudomonas palustris (strain HaA2).